Here is a 304-residue protein sequence, read N- to C-terminus: Non-structural maintenance of chromosomes element 3 homolog (304 aa).

Disordered regions lie at residues 1-82 (MLQK…PRSQ) and 285-304 (ALAD…APSS). Positions 32–43 (AGEDARVLRDGF) are enriched in basic and acidic residues. Serine 57, serine 60, and serine 64 each carry phosphoserine. Residues 60-80 (SQGPSPQGARRAQAAPAVGPR) are compositionally biased toward low complexity. An interaction with NSMCE1 region spans residues 78–304 (GPRSQKQLEL…PQPSGPAPSS (227 aa)). The region spanning 85–285 (LELKVSELVQ…KDWPAQYCEA (201 aa)) is the MAGE domain.

In terms of assembly, component of the SMC5-SMC6 complex which consists at least of SMC5, SMC6, NSMCE2, NSMCE1, NSMCE4A or EID3 and NSMCE3. NSMCE1, NSMCE4A or EID3 and NSMCE3 probably form a subcomplex that bridges the head domains of the SMC5:SMC6 heterodimer. Interacts with PJA1. Interacts with E2F1 (via C-terminus). Interacts with NGFR (via C-terminus). Interacts with NSMCE1. Interacts with NSMCE4. Interacts with SMC6. Interacts with EID3. In terms of tissue distribution, ubiquitous.

It is found in the cytoplasm. The protein resides in the nucleus. The protein localises to the chromosome. Its subcellular location is the telomere. Functionally, component of the SMC5-SMC6 complex, a complex involved in repair of DNA double-strand breaks by homologous recombination. The complex may promote sister chromatid homologous recombination by recruiting the SMC1-SMC3 cohesin complex to double-strand breaks. The complex is required for telomere maintenance via recombination in ALT (alternative lengthening of telomeres) cell lines and mediates sumoylation of shelterin complex (telosome) components which is proposed to lead to shelterin complex disassembly in ALT-associated PML bodies (APBs). In vitro enhances ubiquitin ligase activity of NSMCE1. Proposed to act through recruitment and/or stabilization of the Ubl-conjugating enzyme (E2) at the E3:substrate complex. May be a growth suppressor that facilitates the entry of the cell into cell cycle arrest. The chain is Non-structural maintenance of chromosomes element 3 homolog from Homo sapiens (Human).